The sequence spans 156 residues: Small ribosomal subunit protein uS7 (156 aa).

This sequence belongs to the universal ribosomal protein uS7 family. In terms of assembly, part of the 30S ribosomal subunit. Contacts proteins S9 and S11.

In terms of biological role, one of the primary rRNA binding proteins, it binds directly to 16S rRNA where it nucleates assembly of the head domain of the 30S subunit. Is located at the subunit interface close to the decoding center, probably blocks exit of the E-site tRNA. This Mycolicibacterium gilvum (strain PYR-GCK) (Mycobacterium gilvum (strain PYR-GCK)) protein is Small ribosomal subunit protein uS7.